A 358-amino-acid polypeptide reads, in one-letter code: Glycerophosphodiester phosphodiesterase, periplasmic (358 aa).

Residues 1-25 (MKLTLKNLSMAIMMSTIVMGSSAMA) form the signal peptide. Residues 31-355 (KIVIAHRGAS…DFPDKAVKFL (325 aa)) form the GP-PDE domain. Histidine 36 functions as the Proton acceptor in the catalytic mechanism. Ca(2+)-binding residues include glutamate 63 and aspartate 65. The active-site Proton donor is histidine 78. Glutamate 171 lines the Ca(2+) pocket.

The protein belongs to the glycerophosphoryl diester phosphodiesterase family. In terms of assembly, homodimer. Ca(2+) serves as cofactor.

The protein localises to the periplasm. The enzyme catalyses a sn-glycero-3-phosphodiester + H2O = an alcohol + sn-glycerol 3-phosphate + H(+). In terms of biological role, glycerophosphodiester phosphodiesterase hydrolyzes glycerophosphodiesters into glycerol-3-phosphate (G3P) and the corresponding alcohol. This is Glycerophosphodiester phosphodiesterase, periplasmic (glpQ) from Escherichia coli (strain K12).